Here is a 384-residue protein sequence, read N- to C-terminus: Cell adhesion molecule CEACAM18 (384 aa).

A signal peptide spans 1–30; sequence MDLSRPRWSLWRRVFLMASLLACGICQASG. Residues N108, N112, N121, N162, and N270 are each glycosylated (N-linked (GlcNAc...) asparagine). The Ig-like C2-type domain occupies 227–314; the sequence is PDYVLLRSNP…LIMYMDVRIQ (88 aa). C255 and C296 are oxidised to a cystine. Residues 358–384 are disordered; the sequence is QPLLNQDKSGSMSVHPRPEDKTRRASR. The segment covering 359–369 has biased composition (polar residues); sequence PLLNQDKSGSM. The segment covering 373-384 has biased composition (basic and acidic residues); the sequence is PRPEDKTRRASR.

This sequence belongs to the immunoglobulin superfamily. CEA family.

The chain is Cell adhesion molecule CEACAM18 from Homo sapiens (Human).